A 537-amino-acid polypeptide reads, in one-letter code: Tyrosine-protein kinase Fyn (537 aa).

G2 carries the N-myristoyl glycine lipid modification. S-palmitoyl cysteine attachment occurs at residues C3 and C6. The residue at position 12 (T12) is a Phosphothreonine; by PKC. Phosphoserine is present on residues S21 and S26. Residues 82–143 (TGVTLFVALY…PSNYVAPVDS (62 aa)) enclose the SH3 domain. The SH2 domain maps to 149–246 (WYFGKLGRKD…GLCCRLVVPC (98 aa)). Phosphotyrosine is present on Y185. Positions 271 to 524 (LQLIKRLGNG…YLQGFLEDYF (254 aa)) constitute a Protein kinase domain. Residues 277 to 285 (LGNGQFGEV) and K299 contribute to the ATP site. The active-site Proton acceptor is D390. At Y420 the chain carries Phosphotyrosine; by autocatalysis. The residue at position 531 (Y531) is a Phosphotyrosine; by CSK.

Belongs to the protein kinase superfamily. Tyr protein kinase family. SRC subfamily. Interacts (via its SH3 domain) with PIK3R1 and PRMT8. Interacts with FYB1, PAG1, and SH2D1A. Interacts with CD79A (tyrosine-phosphorylated form); the interaction increases FYN activity. Interacts (via SH2 domain) with CSF1R (tyrosine phosphorylated). Interacts with TOM1L1 (phosphorylated form). Interacts with KDR (tyrosine phosphorylated). Interacts (via SH3 domain) with KLHL2 (via N-terminus). Interacts with SH2D1A and SLAMF1. Interacts with ITCH; the interaction phosphorylates ITCH and negatively regulates its activity. Interacts with FASLG. Interacts with RUNX3. Interacts with KIT. Interacts with EPHA8; possible downstream effector of EPHA8 in regulation of cell adhesion. Interacts with PTK2/FAK1; this interaction leads to PTK2/FAK1 phosphorylation and activation. Interacts with CAV1; this interaction couples integrins to the Ras-ERK pathway. Interacts with UNC119. Interacts (via SH2 domain) with PTPRH (phosphorylated form). Interacts with PTPRO (phosphorylated form). Interacts with PTPRB (phosphorylated form). Interacts with FYB2. Interacts with DSCAM. Interacts with SKAP1 and FYB1; this interaction promotes the phosphorylation of CLNK. Interacts with NEDD9; in the presence of PTK2. It depends on Mn(2+) as a cofactor. In terms of processing, autophosphorylated at Tyr-420. Phosphorylation on the C-terminal tail at Tyr-531 by CSK maintains the enzyme in an inactive state. PTPRC/CD45 dephosphorylates Tyr-531 leading to activation. Ultraviolet B (UVB) strongly increase phosphorylation at Thr-12 and kinase activity, and promotes translocation from the cytoplasm to the nucleus. Dephosphorylation at Tyr-420 by PTPN2 negatively regulates T-cell receptor signaling. Phosphorylated at tyrosine residues, which can be enhanced by NTN1. Post-translationally, palmitoylated. Palmitoylation at Cys-3 and Cys-6, probably by ZDHHC21, regulates subcellular location.

It is found in the cytoplasm. The protein localises to the nucleus. It localises to the cell membrane. Its subcellular location is the perikaryon. The enzyme catalyses L-tyrosyl-[protein] + ATP = O-phospho-L-tyrosyl-[protein] + ADP + H(+). With respect to regulation, inhibited by phosphorylation of Tyr-531 by leukocyte common antigen and activated by dephosphorylation of this site. Its function is as follows. Non-receptor tyrosine-protein kinase that plays a role in many biological processes including regulation of cell growth and survival, cell adhesion, integrin-mediated signaling, cytoskeletal remodeling, cell motility, immune response and axon guidance. Inactive FYN is phosphorylated on its C-terminal tail within the catalytic domain. Following activation by PKA, the protein subsequently associates with PTK2/FAK1, allowing PTK2/FAK1 phosphorylation, activation and targeting to focal adhesions. Involved in the regulation of cell adhesion and motility through phosphorylation of CTNNB1 (beta-catenin) and CTNND1 (delta-catenin). Regulates cytoskeletal remodeling by phosphorylating several proteins including the actin regulator WAS and the microtubule-associated proteins MAP2 and MAPT. Promotes cell survival by phosphorylating AGAP2/PIKE-A and preventing its apoptotic cleavage. Participates in signal transduction pathways that regulate the integrity of the glomerular slit diaphragm (an essential part of the glomerular filter of the kidney) by phosphorylating several slit diaphragm components including NPHS1, KIRREL1 and TRPC6. Plays a role in neural processes by phosphorylating DPYSL2, a multifunctional adapter protein within the central nervous system, ARHGAP32, a regulator for Rho family GTPases implicated in various neural functions, and SNCA, a small pre-synaptic protein. Involved in reelin signaling by mediating phosphorylation of DAB1 following reelin (RELN)-binding to its receptor. Participates in the downstream signaling pathways that lead to T-cell differentiation and proliferation following T-cell receptor (TCR) stimulation. Phosphorylates PTK2B/PYK2 in response to T-cell receptor activation. Also participates in negative feedback regulation of TCR signaling through phosphorylation of PAG1, thereby promoting interaction between PAG1 and CSK and recruitment of CSK to lipid rafts. CSK maintains LCK and FYN in an inactive form. Promotes CD28-induced phosphorylation of VAV1. In mast cells, phosphorylates CLNK after activation of immunoglobulin epsilon receptor signaling. Can also promote CD244-mediated NK cell activation. The chain is Tyrosine-protein kinase Fyn from Sus scrofa (Pig).